The primary structure comprises 434 residues: Flagellum-specific ATP synthase (434 aa).

164 to 171 (AGSGVGKS) contacts ATP.

The protein belongs to the ATPase alpha/beta chains family.

Its subcellular location is the cytoplasm. It catalyses the reaction ATP + H2O + 4 H(+)(in) = ADP + phosphate + 5 H(+)(out). Its function is as follows. Probable catalytic subunit of a protein translocase for flagellum-specific export, or a proton translocase involved in local circuits at the flagellum. In Helicobacter pylori (strain ATCC 700392 / 26695) (Campylobacter pylori), this protein is Flagellum-specific ATP synthase (fliI).